A 560-amino-acid polypeptide reads, in one-letter code: MKVWMAILIGILCWQSSVWAVCPAWSPARAQEEISRLQQQIKQWDDDYWKEGKSEVEDGVYDQLSARLTQWQRCFGSEPRDVMMPPLNGAVMHPVAHTGVRKMVDKNALSLWMRERSDLWVQPKVDGVAVTLVYRDGKLNKAISRGNGLKGEDWTQKVSLISAVPQTVSGPLANSTLQGEIFLQREGHIQQQMGGINARAKVAGLMMRQDDSDTLNSLGVFVWAWPDGPQLMSDRLKELATAGFTLTQTYTRAVKNADEVARVRNEWWKAELPFVTDGVVVRAAKEPESRHWLPGQAEWLVAWKYQPVAQVAEVKAIQFAVGKSGKISVVASLAPVMLDDKKVQRVNIGSVRRWQEWDIAPGDQILVSLAGQGIPRIDDVVWRGAERTKPTPPENRFNSLTCYFASDVCQEQFISRLVWLGAKQVLGLDGIGEAGWRALHQTHRFEHIFSWLLLTPEQLQNTPGIAKSKSAQLWHQFNLARKQPFTRWVMAMGIPLTRAALNASDERSWSQLLFSTEQFWQQLPGTGSGRARQVIEWKENAQIKKLGSWLAAQQITGFEP.

Lysine 124 acts as the N6-AMP-lysine intermediate in catalysis.

Belongs to the NAD-dependent DNA ligase family. LigB subfamily.

The catalysed reaction is NAD(+) + (deoxyribonucleotide)n-3'-hydroxyl + 5'-phospho-(deoxyribonucleotide)m = (deoxyribonucleotide)n+m + AMP + beta-nicotinamide D-nucleotide.. Catalyzes the formation of phosphodiester linkages between 5'-phosphoryl and 3'-hydroxyl groups in double-stranded DNA using NAD as a coenzyme and as the energy source for the reaction. The protein is DNA ligase B of Escherichia coli (strain K12 / DH10B).